Here is a 132-residue protein sequence, read N- to C-terminus: Fatty acid-binding protein, adipocyte (132 aa).

C2 is modified (N-acetylcysteine). The residue at position 13 (S13) is a Phosphoserine. Phosphotyrosine; by Tyr-kinases is present on Y20. A Nuclear localization signal motif is present at residues 22–32; that stretch reads KEVGVGFATRK. Residue 127–129 participates in a fatty acid binding; sequence RVY.

This sequence belongs to the calycin superfamily. Fatty-acid binding protein (FABP) family. As to quaternary structure, monomer. Homodimer. Interacts with PPARG.

The protein resides in the cytoplasm. The protein localises to the nucleus. Its function is as follows. Lipid transport protein in adipocytes. Binds both long chain fatty acids and retinoic acid. Delivers long-chain fatty acids and retinoic acid to their cognate receptors in the nucleus. This chain is Fatty acid-binding protein, adipocyte (Fabp4), found in Mus musculus (Mouse).